The sequence spans 595 residues: DNA polymerase (595 aa).

The region spanning 1–212 (MIELRHEVQG…CKSLTPLVPD (212 aa)) is the 3'-5' exonuclease domain. Residues 213 to 595 (VSRSLVPYEH…SWGSLYGADY (383 aa)) are polymerase.

Belongs to the DNA polymerase type-A family.

It catalyses the reaction DNA(n) + a 2'-deoxyribonucleoside 5'-triphosphate = DNA(n+1) + diphosphate. Functionally, replicates viral genomic DNA. This polymerase possesses two enzymatic activities: DNA synthesis (polymerase) and an exonucleolytic activity that degrades single-stranded DNA in the 3'-5' direction. The polypeptide is DNA polymerase (44) (Mycobacterium phage L5 (Mycobacteriophage L5)).